A 475-amino-acid chain; its full sequence is Ribulose bisphosphate carboxylase large chain (475 aa).

Positions 1–2 (MS) are excised as a propeptide. The residue at position 3 (Pro-3) is an N-acetylproline. Residue Lys-14 is modified to N6,N6,N6-trimethyllysine. Substrate-binding residues include Asn-123 and Thr-173. The active-site Proton acceptor is Lys-175. Substrate is bound at residue Lys-177. The Mg(2+) site is built by Lys-201, Asp-203, and Glu-204. The residue at position 201 (Lys-201) is an N6-carboxylysine. His-294 serves as the catalytic Proton acceptor. 3 residues coordinate substrate: Arg-295, His-327, and Ser-379.

It belongs to the RuBisCO large chain family. Type I subfamily. In terms of assembly, heterohexadecamer of 8 large chains and 8 small chains; disulfide-linked. The disulfide link is formed within the large subunit homodimers. The cofactor is Mg(2+). Post-translationally, the disulfide bond which can form in the large chain dimeric partners within the hexadecamer appears to be associated with oxidative stress and protein turnover.

It localises to the plastid. The protein resides in the chloroplast. It carries out the reaction 2 (2R)-3-phosphoglycerate + 2 H(+) = D-ribulose 1,5-bisphosphate + CO2 + H2O. The catalysed reaction is D-ribulose 1,5-bisphosphate + O2 = 2-phosphoglycolate + (2R)-3-phosphoglycerate + 2 H(+). In terms of biological role, ruBisCO catalyzes two reactions: the carboxylation of D-ribulose 1,5-bisphosphate, the primary event in carbon dioxide fixation, as well as the oxidative fragmentation of the pentose substrate in the photorespiration process. Both reactions occur simultaneously and in competition at the same active site. This is Ribulose bisphosphate carboxylase large chain from Vitis vinifera (Grape).